The primary structure comprises 264 residues: 3-methyl-2-oxobutanoate hydroxymethyltransferase (264 aa).

Mg(2+)-binding residues include Asp45 and Asp84. Residues 45–46 (DS), Asp84, and Lys112 contribute to the 3-methyl-2-oxobutanoate site. Residue Glu114 participates in Mg(2+) binding. Residue Glu181 is the Proton acceptor of the active site.

It belongs to the PanB family. In terms of assembly, homodecamer; pentamer of dimers. Requires Mg(2+) as cofactor.

The protein resides in the cytoplasm. The enzyme catalyses 3-methyl-2-oxobutanoate + (6R)-5,10-methylene-5,6,7,8-tetrahydrofolate + H2O = 2-dehydropantoate + (6S)-5,6,7,8-tetrahydrofolate. Its pathway is cofactor biosynthesis; (R)-pantothenate biosynthesis; (R)-pantoate from 3-methyl-2-oxobutanoate: step 1/2. In terms of biological role, catalyzes the reversible reaction in which hydroxymethyl group from 5,10-methylenetetrahydrofolate is transferred onto alpha-ketoisovalerate to form ketopantoate. The sequence is that of 3-methyl-2-oxobutanoate hydroxymethyltransferase from Pectobacterium atrosepticum (strain SCRI 1043 / ATCC BAA-672) (Erwinia carotovora subsp. atroseptica).